Reading from the N-terminus, the 330-residue chain is Glucosyltransferase 3 (330 aa).

Thr16 serves as a coordination point for UDP. Residues 106-111 (MFSGNF) form a substrate protein-binding loop region. UDP is bound by residues Arg179, 211 to 214 (YRPD), and 244 to 249 (SYKLGS).

Belongs to the Gtf3 glucosyltransferase family. As to quaternary structure, homotetramer; a dimer of dimers. In vitro glycosyltransferase activity is metal-independent. serves as cofactor.

It participates in protein modification; protein glycosylation. Its function is as follows. Required for polymorphic O-glycosylation of the serine-rich repeat protein Fap1. Catalyzes the second step in glycosylation of the serine-rich repeat protein in this bacteria. Transfers glucose from UDP-glucose to the terminal GlcNAc moiety of 3-O-(N-acetyl-alpha-D-glucosaminyl)-L-seryl-[protein] which results from the first glycosylation step of Fap1; does not use other sugar nucleotides as substrates. The sequence is that of Glucosyltransferase 3 from Streptococcus parasanguinis.